A 472-amino-acid polypeptide reads, in one-letter code: Transcription factor TGAL1 (472 aa).

Residues 136-190 (WGESTIADTSPRTDTSTDPDTDERNQMFEQGQLAAPTASDSSDRSKDKLDHKTLR) form a disordered region. A compositionally biased stretch (low complexity) spans 143–153 (DTSPRTDTSTD). Basic and acidic residues predominate over residues 176-187 (SSDRSKDKLDHK). The region spanning 185–229 (DHKTLRRLAQNREAARKSRLRKKAYIQNLESSRLKLTQIEQELQR) is the bZIP domain. Residues 187–207 (KTLRRLAQNREAARKSRLRKK) are basic motif. The segment at 213–227 (LESSRLKLTQIEQEL) is leucine-zipper. Positions 252-469 (ALAFDMEYAR…RALSSLWLAR (218 aa)) constitute a DOG1 domain.

The protein belongs to the bZIP family. In terms of assembly, isoforms 1 and 2 interact with NPR2/NH2. Isoform 2 interacts with NPR1/NH1 and NPR3/NH3.

Its subcellular location is the nucleus. Its function is as follows. Transcriptional regulator involved in defense response. This is Transcription factor TGAL1 from Oryza sativa subsp. japonica (Rice).